We begin with the raw amino-acid sequence, 326 residues long: Glycolipid sulfotransferase MRA_1383 (326 aa).

Residue 40–45 (KSGLTW) participates in 3'-phosphoadenylyl sulfate binding. Catalysis depends on His-97, which acts as the Proton acceptor. 3'-phosphoadenylyl sulfate is bound at residue 116-124 (RDPRDAAVS).

It belongs to the sulfotransferase 1 family.

Involved in the synthesis of cell wall sulfolipids. The protein is Glycolipid sulfotransferase MRA_1383 of Mycobacterium tuberculosis (strain ATCC 25177 / H37Ra).